Consider the following 316-residue polypeptide: Ribosomal RNA small subunit methyltransferase H (316 aa).

S-adenosyl-L-methionine-binding positions include 35-37 (AGH), D55, F84, D105, and Q112.

The protein belongs to the methyltransferase superfamily. RsmH family.

The protein localises to the cytoplasm. It catalyses the reaction cytidine(1402) in 16S rRNA + S-adenosyl-L-methionine = N(4)-methylcytidine(1402) in 16S rRNA + S-adenosyl-L-homocysteine + H(+). Its function is as follows. Specifically methylates the N4 position of cytidine in position 1402 (C1402) of 16S rRNA. This Streptococcus mutans serotype c (strain ATCC 700610 / UA159) protein is Ribosomal RNA small subunit methyltransferase H.